Here is a 299-residue protein sequence, read N- to C-terminus: Triplex capsid protein 1 (299 aa).

Belongs to the herpesviridae TRX1 protein family. As to quaternary structure, interacts with TRX2, MCP and capsid vertex component 2/CVC2.

Its subcellular location is the virion. It localises to the host nucleus. Structural component of the T=16 icosahedral capsid. The capsid is composed of pentamers and hexamers of major capsid protein/MCP, which are linked together by heterotrimers called triplexes. These triplexes are formed by a single molecule of triplex protein 1/TRX1 and two copies of triplex protein 2/TRX2. Additionally, TRX1 is required for efficient transport of TRX2 to the nucleus, which is the site of capsid assembly. The protein is Triplex capsid protein 1 of Homo sapiens (Human).